A 336-amino-acid polypeptide reads, in one-letter code: Aspartate--ammonia ligase (336 aa).

It belongs to the class-II aminoacyl-tRNA synthetase family. AsnA subfamily.

The protein localises to the cytoplasm. The catalysed reaction is L-aspartate + NH4(+) + ATP = L-asparagine + AMP + diphosphate + H(+). The protein operates within amino-acid biosynthesis; L-asparagine biosynthesis; L-asparagine from L-aspartate (ammonia route): step 1/1. The protein is Aspartate--ammonia ligase of Limosilactobacillus fermentum (strain NBRC 3956 / LMG 18251) (Lactobacillus fermentum).